Here is a 351-residue protein sequence, read N- to C-terminus: uncharacterized protein (351 aa).

Positions 1 to 27 are cleaved as a signal peptide; that stretch reads MKNKKRVLIASSLSCAILLLSAATTQA. Positions 27-71 are disordered; that stretch reads ANSAHKDSQDQNKKEHVDKSQQKDKRNVTNKDKNSTAPDDIGKNG. Positions 30–60 are enriched in basic and acidic residues; that stretch reads AHKDSQDQNKKEHVDKSQQKDKRNVTNKDKN.

This sequence belongs to the aerolysin family.

This is an uncharacterized protein from Staphylococcus aureus (strain USA300).